Reading from the N-terminus, the 901-residue chain is Putative receptor protein kinase CRINKLY4 (901 aa).

Residues 1–24 (MDHVPALVLAGCCFLALLPGWACG) form the signal peptide. The Extracellular segment spans residues 25-423 (LGSMSSIAVS…SRKLMAFQMR (399 aa)). 7 repeat units span residues 33–68 (VSYG…GAPP), 72–107 (FLGL…GVPQ), 125–160 (LCAL…AVDE), 162–195 (VSTV…GVVG), 203–236 (FQSI…QVVP), 253–287 (MSTV…TSPP), and 292–330 (MYAL…AVPP). Positions 33 to 330 (VSYGEDGPVF…PLALPMAVPP (298 aa)) are 7 X 36 AA repeats. 2 N-linked (GlcNAc...) asparagine glycosylation sites follow: asparagine 151 and asparagine 179. A glycan (N-linked (GlcNAc...) asparagine) is linked at asparagine 282. Disulfide bonds link cysteine 338–cysteine 365, cysteine 368–cysteine 382, and cysteine 372–cysteine 390. Residues 357-391 (CKPANSRLCLPCSTGCPEGLYESSPCNATADRVCQ) form a TNFR-Cys repeat. Asparagine 383 is a glycosylation site (N-linked (GlcNAc...) asparagine). The helical transmembrane segment at 424-444 (IFVAEIVFAVVLVLSVSVTTC) threads the bilayer. The Cytoplasmic segment spans residues 445–901 (LYVRHKLRHC…QENLYLQHNF (457 aa)). The Protein kinase domain occupies 505 to 712 (FSEDSQVGKG…EILSGRKAID (208 aa)). Residues 511-519 (VGKGSFSCV) and lysine 533 contribute to the ATP site. The active-site Proton acceptor is aspartate 634. Residues 845-876 (VTSSQRRKSSASEADIVGRRATDGRNVGSSIG) are disordered.

It belongs to the protein kinase superfamily. Ser/Thr protein kinase family. As to quaternary structure, homodimer.

Its subcellular location is the cell membrane. The protein localises to the endosome. It is found in the multivesicular body membrane. It carries out the reaction L-seryl-[protein] + ATP = O-phospho-L-seryl-[protein] + ADP + H(+). It catalyses the reaction L-threonyl-[protein] + ATP = O-phospho-L-threonyl-[protein] + ADP + H(+). Its function is as follows. Putative receptor protein kinase. Could play a role in a differentiation signal. The CRINKLY4 (CR4) mutation affects leaf epidermis differentiation such that cell size and morphology are altered, and surface functions are compromised, allowing graft-like fusions between organs. The polypeptide is Putative receptor protein kinase CRINKLY4 (CR4) (Zea mays (Maize)).